The chain runs to 141 residues: MAIERTLSIVKPDAVEKNIIGKVISRFEKAGLKIVAAKMMHLTEEKARGFYAEHEGRPFFAGLVEFMTSGPVVVQVLEGENAIALNRELMGATNPAEAAEGTLRKDFADSVGRNAVYGSDSPASAEREINYFFDASEICPR.

Residues Lys11, Phe59, Arg87, Thr93, Arg104, and Asn114 each coordinate ATP.

The protein belongs to the NDK family. In terms of assembly, homotetramer. The cofactor is Mg(2+).

Its subcellular location is the cytoplasm. The catalysed reaction is a 2'-deoxyribonucleoside 5'-diphosphate + ATP = a 2'-deoxyribonucleoside 5'-triphosphate + ADP. It carries out the reaction a ribonucleoside 5'-diphosphate + ATP = a ribonucleoside 5'-triphosphate + ADP. In terms of biological role, major role in the synthesis of nucleoside triphosphates other than ATP. The ATP gamma phosphate is transferred to the NDP beta phosphate via a ping-pong mechanism, using a phosphorylated active-site intermediate. This is Nucleoside diphosphate kinase from Saccharophagus degradans (strain 2-40 / ATCC 43961 / DSM 17024).